A 423-amino-acid chain; its full sequence is Dihydrolipoyllysine-residue succinyltransferase component of 2-oxoglutarate dehydrogenase complex (423 aa).

Residues 1-76 (MPEVKVPELA…EVGQAIAVIG (76 aa)) form the Lipoyl-binding domain. Residue K42 is modified to N6-lipoyllysine. The segment at 76–185 (GEGSGNASKE…APAKEEKKYN (110 aa)) is disordered. Over residues 80 to 96 (GNASKENSNDNTPQQND) the composition is skewed to polar residues. Residues 99–115 (TNNKKEETTNKSADKAE) are compositionally biased toward basic and acidic residues. Residues 116-131 (VNQTNDDNQQRVNATP) are compositionally biased toward polar residues. The Peripheral subunit-binding (PSBD) domain maps to 128–164 (NATPSARRYARENGVNLAEVSPKTNDVVRKEDIDKKQ). Over residues 153–164 (DVVRKEDIDKKQ) the composition is skewed to basic and acidic residues. Low complexity predominate over residues 165–177 (QAPASTQTTQQAP). Active-site residues include H394 and D398.

This sequence belongs to the 2-oxoacid dehydrogenase family. As to quaternary structure, forms a 24-polypeptide structural core with octahedral symmetry. Part of the 2-oxoglutarate dehydrogenase (OGDH) complex composed of E1 (2-oxoglutarate dehydrogenase), E2 (dihydrolipoamide succinyltransferase) and E3 (dihydrolipoamide dehydrogenase); the complex contains multiple copies of the three enzymatic components (E1, E2 and E3). (R)-lipoate serves as cofactor.

It carries out the reaction N(6)-[(R)-dihydrolipoyl]-L-lysyl-[protein] + succinyl-CoA = N(6)-[(R)-S(8)-succinyldihydrolipoyl]-L-lysyl-[protein] + CoA. It participates in amino-acid degradation; L-lysine degradation via saccharopine pathway; glutaryl-CoA from L-lysine: step 6/6. In terms of biological role, E2 component of the 2-oxoglutarate dehydrogenase (OGDH) complex which catalyzes the second step in the conversion of 2-oxoglutarate to succinyl-CoA and CO(2). The protein is Dihydrolipoyllysine-residue succinyltransferase component of 2-oxoglutarate dehydrogenase complex (odhB) of Staphylococcus aureus (strain MRSA252).